We begin with the raw amino-acid sequence, 446 residues long: Citrate/sodium symporter (446 aa).

Residues 1–27 (MTNMSQPPATEKKGVSDLLGFKIFGMP) are Cytoplasmic-facing. The helical transmembrane segment at 28–44 (LPLYAFALITLLLSHFY) threads the bilayer. Residues 45–50 (NALPTD) lie on the Periplasmic side of the membrane. The chain crosses the membrane as a helical span at residues 51-71 (IVGGFAIMFIIGAIFGEIGKR). At 72 to 80 (LPIFNKYIG) the chain is on the cytoplasmic side. The chain crosses the membrane as a helical span at residues 81–95 (GAPVMIFLVAAYFVY). Residues 96–115 (AGIFTQKEIDAISNVMDKSN) lie on the Periplasmic side of the membrane. Residues 116–130 (FLNLFIAVLITGAIL) form a helical membrane-spanning segment. The Cytoplasmic portion of the chain corresponds to 131–136 (SVNRRL). The helical transmembrane segment at 137–166 (LLKSLLGYIPTILMGIVGASIFGIAIGLVF) threads the bilayer. Over 167–181 (GIPVDRIMMLYVLPI) the chain is Periplasmic. Residues I181 and G183 each coordinate Na(+). The helical intramembrane region spans 182–189 (MGGGNGAG). 2 residues coordinate citrate: N186 and G187. At 190 to 212 (AVPLSEIYHSVTGRSREEYYSTA) the chain is on the periplasmic side. A helical membrane pass occupies residues 213–233 (IAILTIANIFAIVFAAVLDII). Topologically, residues 234-264 (GKKHTWLSGEGELVRKASFKVEEDEKTGQIT) are cytoplasmic. A helical membrane pass occupies residues 265–287 (HRETAVGLVLSTTCFLLAYVVAK). Topologically, residues 288 to 299 (KILPSIGGVAIH) are periplasmic. Residues 300-315 (YFAWMVLIVAALNASG) form a helical membrane-spanning segment. Residues 316-327 (LCSPEIKAGAKR) lie on the Cytoplasmic side of the membrane. A helical transmembrane segment spans residues 328–351 (LSDFFSKQLLWVLMVGVGVCYTDL). The Periplasmic portion of the chain corresponds to 352-359 (QEIINAIT). A helical membrane pass occupies residues 360 to 381 (FANVVIAAIIVIGAVLGAAIGG). Residues 382–398 (WLMGFFPIESAITAGLC) are Cytoplasmic-facing. Residues M399 and N401 each coordinate Na(+). The segment at residues 399-406 (MANRGGSG) is an intramembrane region (helical). Citrate-binding residues include R402, G404, and S405. Topologically, residues 407-416 (DLEVLSACNR) are cytoplasmic. Residues 417 to 438 (MNLISYAQISSRLGGGIVLVIA) form a helical membrane-spanning segment. R428 lines the citrate pocket. Residues 439-446 (SIVFGMMI) lie on the Periplasmic side of the membrane.

Belongs to the 2-hydroxycarboxylate transporter (2-HCT) (TC 2.A.24) family. As to quaternary structure, homodimer.

The protein resides in the cell inner membrane. The catalysed reaction is citrate(out) + 2 Na(+)(out) = citrate(in) + 2 Na(+)(in). With respect to regulation, in the absence of Na(+), transport is inhibited by the thiol reagents N-ethylmaleimide (NEM) and the methanethiosulfonate (MTS) derivatives MTSEA, MTSET and MTSES. However, inactivation by NEM, MTSES and MTSET is prevented by the presence of Na(+). In the absence of Na(+), the substrate citrate has no effect on the inactivation by permeable or impermeable thiol reagents. In contrast, when subsaturating concentrations of Na(+) are present, citrate significantly reduces inactivation, suggesting ordered binding of the substrate and co-ion; citrate is bound after Na(+). The membrane impermeable bulky maleimide AmdiS does not inactivate the transporter in right-side-out membrane vesicles. The apparent affinity for Na(+) decreases with increasing proton concentration. Protons cannot replace Na(+) in the translocation step but the decrease in apparent affinity for Na(+) towards lower pH suggests that protons can compete with Na(+) for the cation-binding sites. Its function is as follows. Secondary active transporter that catalyzes the uptake of citrate across the membrane with the concomitant uptake of sodium. There are conflicting data regarding exact substrate stoichiometry: the sodium/citrate stoichiometry was predicted to be 1, but the latest studies suggest that CitS transports citrate in symport with 2 sodium ions. Transports citrate as a divalent citrate anion, H-citrate(2-). Shows narrow substrate specificity and is very specific, transporting only citrate and to a low extent citromalate. Symport of Na(+) is absolutely required in the range pH 5-7 because no uptake can be detected in the absence of Na(+). Lithium can replace Na(+) in the symport reaction but it takes about a 200-fold higher concentration of Li(+) over Na(+) to achieve the same rate of uptake. This Klebsiella pneumoniae protein is Citrate/sodium symporter.